We begin with the raw amino-acid sequence, 551 residues long: Calcium-dependent protein kinase 3 (551 aa).

A disordered region spans residues 1-57 (MGNCCRSPAAAAREDVKSSHFPASAGKKKPHQARNGGVGGGGGGGGGGGGGGGAGQK). Gly2 is lipidated: N-myristoyl glycine. Over residues 36 to 55 (GGVGGGGGGGGGGGGGGGAG) the composition is skewed to gly residues. The Protein kinase domain occupies 77 to 335 (YALDRELGRG…AKQVLEHPWL (259 aa)). Residues 83–91 (LGRGEFGVT) and Lys106 contribute to the ATP site. Residue Asp201 is the Proton acceptor of the active site. Positions 341 to 371 (APNVPLGDIVKSRLKQFSRMNRFKRRALRVI) are autoinhibitory domain. EF-hand domains lie at 378–413 (EEVE…FGSH), 414–449 (LAES…LQRM), 450–485 (ANDE…DGAG), and 486–521 (DSME…GTDW). Residues Asp391, Asp393, Asp395, Glu402, Asp427, Asn429, Glu438, Asp463, Asp465, Asn467, Tyr469, Glu474, Asp499, Asp501, Asp503, Lys505, and Glu510 each contribute to the Ca(2+) site.

The protein belongs to the protein kinase superfamily. Ser/Thr protein kinase family. CDPK subfamily. As to expression, expressed in roots and developing seeds.

The protein resides in the membrane. It carries out the reaction L-seryl-[protein] + ATP = O-phospho-L-seryl-[protein] + ADP + H(+). It catalyses the reaction L-threonyl-[protein] + ATP = O-phospho-L-threonyl-[protein] + ADP + H(+). Activated by calcium. Autophosphorylation may play an important role in the regulation of the kinase activity. In terms of biological role, may play a role in signal transduction pathways that involve calcium as a second messenger. The protein is Calcium-dependent protein kinase 3 of Oryza sativa subsp. japonica (Rice).